The primary structure comprises 205 residues: Transmembrane emp24 domain-containing protein A (205 aa).

The signal sequence occupies residues 1–24; the sequence is MMNNKLLLLVIALLCIASNSIVES. Residues 25 to 172 are Lumenal-facing; the sequence is FSFKVSAKVE…RNTAESTNSR (148 aa). The region spanning 34–116 is the GOLD domain; sequence EECIYEEIGV…DKTVSFILSV (83 aa). The chain crosses the membrane as a helical span at residues 173–193; it reads VLWWSVFEAFVLIALSIWQIY. Over 194–205 the chain is Cytoplasmic; the sequence is YLRRFFEVKRAV.

It belongs to the EMP24/GP25L family.

The protein resides in the cytoplasmic vesicle membrane. Its function is as follows. Could have a role in the budding of coatomer-coated and other species of coated vesicles. The polypeptide is Transmembrane emp24 domain-containing protein A (empA) (Dictyostelium discoideum (Social amoeba)).